We begin with the raw amino-acid sequence, 429 residues long: Endo-beta-1,4-galactanase (429 aa).

Positions 1-21 (MKSKVKMFFAAAIVWSACSST) are cleaved as a signal peptide. 146–149 (DPAK) contacts substrate. The active-site Proton donor is the Glu-194. Residues 233–234 (TN) and His-267 each bind substrate. The Nucleophile role is filled by Glu-292. Thr-296 provides a ligand contact to substrate. The Ca(2+) site is built by Asp-301, Asp-303, His-305, and Asn-307. The substrate site is built by Lys-311 and Asp-388. 2 residues coordinate Ca(2+): Ser-396 and Asp-399.

Belongs to the glycosyl hydrolase 53 family. It depends on Ca(2+) as a cofactor.

It localises to the secreted. The catalysed reaction is The enzyme specifically hydrolyzes (1-&gt;4)-beta-D-galactosidic linkages in type I arabinogalactans.. Involved in galactan degradation. Degrades arabinose-free galactan to galactooligosaccharides, producing galactotetraose as the main product along with galactotriose, galactobiose, and galactose. Is also able to degrade galactotetraose, galactotriose and galactobiose, suggesting an additional exo-mode of activity. May hydrolyze the beta-1,4-galactan linkages of the galactan portion of arabinogalactan type I, a pectic plant polysaccharide from which most of the arabinose has been removed. In Bacillus subtilis (strain 168), this protein is Endo-beta-1,4-galactanase.